The sequence spans 292 residues: AKT-interacting protein (292 aa).

Residues 1 to 11 (MNPFWSMSTSS) show a composition bias toward polar residues. The segment at 1–63 (MNPFWSMSTS…TSPAPAAQST (63 aa)) is disordered. Residues 14–23 (KRSEGEEKTL) are compositionally biased toward basic and acidic residues. S30 bears the Phosphoserine mark. The UBC core domain maps to 74-222 (YLEYSLLAEF…VVDSVKVCTA (149 aa)).

Belongs to the ubiquitin-conjugating enzyme family. FTS subfamily. In terms of assembly, component of the FTS/Hook/FHIP complex (FHF complex), composed of AKTIP/FTS, FHIP1B, and one or more members of the Hook family of proteins HOOK1, HOOK2, and HOOK3. Interacts directly with HOOK1, HOOK2 and HOOK3. The FHF complex associates with the homotypic vesicular sorting complex (the HOPS complex). Also interacts with AKT1. May interact with FHIP1A.

The protein localises to the cytoplasm. It is found in the cell membrane. Functionally, component of the FTS/Hook/FHIP complex (FHF complex). The FHF complex may function to promote vesicle trafficking and/or fusion via the homotypic vesicular protein sorting complex (the HOPS complex). Regulates apoptosis by enhancing phosphorylation and activation of AKT1. Increases release of TNFSF6 via the AKT1/GSK3B/NFATC1 signaling cascade. FHF complex promotes the distribution of AP-4 complex to the perinuclear area of the cell. The polypeptide is AKT-interacting protein (Homo sapiens (Human)).